The primary structure comprises 230 residues: DNA mismatch repair protein MutH (230 aa).

Belongs to the MutH family.

The protein resides in the cytoplasm. Sequence-specific endonuclease that cleaves unmethylated GATC sequences. It is involved in DNA mismatch repair. This is DNA mismatch repair protein MutH from Citrobacter koseri (strain ATCC BAA-895 / CDC 4225-83 / SGSC4696).